A 231-amino-acid polypeptide reads, in one-letter code: Large ribosomal subunit protein uL1 (231 aa).

It belongs to the universal ribosomal protein uL1 family. In terms of assembly, part of the 50S ribosomal subunit.

Binds directly to 23S rRNA. The L1 stalk is quite mobile in the ribosome, and is involved in E site tRNA release. In terms of biological role, protein L1 is also a translational repressor protein, it controls the translation of the L11 operon by binding to its mRNA. The protein is Large ribosomal subunit protein uL1 of Paracidovorax citrulli (strain AAC00-1) (Acidovorax citrulli).